We begin with the raw amino-acid sequence, 186 residues long: Tumor necrosis factor, alpha-induced protein 8-like protein 2 B (186 aa).

This sequence belongs to the TNFAIP8 family. TNFAIP8L2 subfamily.

Functionally, acts as a negative regulator of innate and adaptive immunity by maintaining immune homeostasis. Negative regulator of Toll-like receptor and T-cell receptor function. Prevents hyperresponsiveness of the immune system and maintains immune homeostasis. Inhibits jun/ap1 and NF-kappa-B activation. Promotes Fas-induced apoptosis. The chain is Tumor necrosis factor, alpha-induced protein 8-like protein 2 B (tnfaip8l2b) from Danio rerio (Zebrafish).